A 178-amino-acid polypeptide reads, in one-letter code: Flagellar transcriptional regulator FlhC (178 aa).

Residues Cys138, Cys141, Cys158, and Cys161 each coordinate Zn(2+).

It belongs to the FlhC family. As to quaternary structure, heterohexamer composed of two FlhC and four FlhD subunits. Each FlhC binds a FlhD dimer, forming a heterotrimer, and a hexamer assembles by dimerization of two heterotrimers. Requires Zn(2+) as cofactor.

It is found in the cytoplasm. In terms of biological role, functions in complex with FlhD as a master transcriptional regulator that regulates transcription of several flagellar and non-flagellar operons by binding to their promoter region. Activates expression of class 2 flagellar genes, including fliA, which is a flagellum-specific sigma factor that turns on the class 3 genes. Also regulates genes whose products function in a variety of physiological pathways. The chain is Flagellar transcriptional regulator FlhC from Erwinia tasmaniensis (strain DSM 17950 / CFBP 7177 / CIP 109463 / NCPPB 4357 / Et1/99).